The following is a 241-amino-acid chain: tRNA (guanine-N(7)-)-methyltransferase (241 aa).

S-adenosyl-L-methionine-binding residues include Glu-71, Glu-96, Asp-123, and Asp-146. The active site involves Asp-146. Substrate is bound by residues Lys-150, Asp-182, and 219–222 (TKFE).

It belongs to the class I-like SAM-binding methyltransferase superfamily. TrmB family.

It carries out the reaction guanosine(46) in tRNA + S-adenosyl-L-methionine = N(7)-methylguanosine(46) in tRNA + S-adenosyl-L-homocysteine. The protein operates within tRNA modification; N(7)-methylguanine-tRNA biosynthesis. In terms of biological role, catalyzes the formation of N(7)-methylguanine at position 46 (m7G46) in tRNA. This is tRNA (guanine-N(7)-)-methyltransferase from Pseudoalteromonas translucida (strain TAC 125).